The chain runs to 464 residues: F-box/FBD/LRR-repeat protein At1g80470 (464 aa).

Residues 15-62 form the F-box domain; it reads DWISGLADDLLLQILSKVPTRESVFTSRMSKRWRNLWRHVPALDLDSS. LRR repeat units follow at residues 96–122, 123–150, 152–178, 197–222, 223–249, and 273–298; these read EEHC…TILS, KVNI…TLYS, VFDA…KFDG, IITH…KLES, MRED…SITD, and DAED…TISA. In terms of domain architecture, FBD spans 359–413; sequence KEEINLSLVPHCFESSLEYVQLKVPITVSETSSKMELAIYFVRNCSVLKKLMLNE.

This is F-box/FBD/LRR-repeat protein At1g80470 from Arabidopsis thaliana (Mouse-ear cress).